The sequence spans 576 residues: K(+)/H(+) antiporter NhaP2 (576 aa).

13 helical membrane-spanning segments follow: residues 6–26 (INSF…LSPM), 34–54 (ILLI…GGIL), 58–78 (YSTA…DGGM), 87–107 (VALW…TSIT), 109–129 (MMAA…GAIV), 163–183 (PMAV…DTEM), 185–205 (FSFM…LGLG), 219–239 (LADG…YAAS), 242–262 (LGGS…NKPT), 271–291 (VLDG…GLLL), 299–319 (ILIP…PVAV), 335–355 (WFIS…VFPM), and 359–379 (LPGA…SLLV). The RCK C-terminal domain occupies 405–486 (SGVEIYPSSE…LEALSNLFSQ (82 aa)).

Belongs to the monovalent cation:proton antiporter 1 (CPA1) transporter (TC 2.A.36) family. NhaP2 subfamily.

It is found in the cell inner membrane. The catalysed reaction is K(+)(in) + H(+)(out) = K(+)(out) + H(+)(in). In terms of biological role, k(+)/H(+) antiporter that extrudes potassium in exchange for external protons and maintains the internal concentration of potassium under toxic levels. This is K(+)/H(+) antiporter NhaP2 from Shewanella baltica (strain OS195).